The following is a 285-amino-acid chain: Bifunctional protein FolD (285 aa).

NADP(+) is bound by residues 165-167 (GRS) and serine 190.

Belongs to the tetrahydrofolate dehydrogenase/cyclohydrolase family. Homodimer.

It catalyses the reaction (6R)-5,10-methylene-5,6,7,8-tetrahydrofolate + NADP(+) = (6R)-5,10-methenyltetrahydrofolate + NADPH. It carries out the reaction (6R)-5,10-methenyltetrahydrofolate + H2O = (6R)-10-formyltetrahydrofolate + H(+). Its pathway is one-carbon metabolism; tetrahydrofolate interconversion. Catalyzes the oxidation of 5,10-methylenetetrahydrofolate to 5,10-methenyltetrahydrofolate and then the hydrolysis of 5,10-methenyltetrahydrofolate to 10-formyltetrahydrofolate. This chain is Bifunctional protein FolD, found in Staphylococcus saprophyticus subsp. saprophyticus (strain ATCC 15305 / DSM 20229 / NCIMB 8711 / NCTC 7292 / S-41).